The following is a 391-amino-acid chain: 23S rRNA (uracil(747)-C(5))-methyltransferase RlmC (391 aa).

The [4Fe-4S] cluster site is built by cysteine 5, cysteine 13, cysteine 16, and cysteine 95. S-adenosyl-L-methionine contacts are provided by glutamine 220, phenylalanine 249, glutamate 276, and asparagine 322. Cysteine 349 serves as the catalytic Nucleophile.

It belongs to the class I-like SAM-binding methyltransferase superfamily. RNA M5U methyltransferase family. RlmC subfamily.

It carries out the reaction uridine(747) in 23S rRNA + S-adenosyl-L-methionine = 5-methyluridine(747) in 23S rRNA + S-adenosyl-L-homocysteine + H(+). Functionally, catalyzes the formation of 5-methyl-uridine at position 747 (m5U747) in 23S rRNA. The polypeptide is 23S rRNA (uracil(747)-C(5))-methyltransferase RlmC (Actinobacillus pleuropneumoniae serotype 3 (strain JL03)).